The primary structure comprises 72 residues: MFTLKKPLLLLVFLGMISLSLCQDERGADEDDGGEMTEEEKRGAFGNLLKGVAKKAGLKILSIAQCKLSGTC.

An N-terminal signal peptide occupies residues 1-22 (MFTLKKPLLLLVFLGMISLSLC). Residues 23 to 40 (QDERGADEDDGGEMTEEE) constitute a propeptide, removed in mature form. The cysteines at positions 66 and 72 are disulfide-linked.

This sequence belongs to the frog skin active peptide (FSAP) family. Brevinin subfamily. Expressed by the skin glands.

The protein resides in the secreted. Antimicrobial peptide. Active against a variety of Gram-negative and Gram-positive bacterial strains. Active against fungus C.glabrata 090902 but not against C.albicans ATCC 10231. Shows hemolytic activity against human erythrocytes. The chain is Brevinin-2SN3 from Sylvirana spinulosa (Fine-spined frog).